A 393-amino-acid chain; its full sequence is NAD(P)H-quinone oxidoreductase subunit H, chloroplastic (393 aa).

It belongs to the complex I 49 kDa subunit family. NDH is composed of at least 16 different subunits, 5 of which are encoded in the nucleus.

Its subcellular location is the plastid. The protein localises to the chloroplast thylakoid membrane. The enzyme catalyses a plastoquinone + NADH + (n+1) H(+)(in) = a plastoquinol + NAD(+) + n H(+)(out). It carries out the reaction a plastoquinone + NADPH + (n+1) H(+)(in) = a plastoquinol + NADP(+) + n H(+)(out). NDH shuttles electrons from NAD(P)H:plastoquinone, via FMN and iron-sulfur (Fe-S) centers, to quinones in the photosynthetic chain and possibly in a chloroplast respiratory chain. The immediate electron acceptor for the enzyme in this species is believed to be plastoquinone. Couples the redox reaction to proton translocation, and thus conserves the redox energy in a proton gradient. This Ranunculus macranthus (Large buttercup) protein is NAD(P)H-quinone oxidoreductase subunit H, chloroplastic.